Here is a 268-residue protein sequence, read N- to C-terminus: Hydroxyacylglutathione hydrolase (268 aa).

Positions 56, 58, 60, 61, 113, 130, and 168 each coordinate Zn(2+).

It belongs to the metallo-beta-lactamase superfamily. Glyoxalase II family. As to quaternary structure, monomer. Requires Zn(2+) as cofactor.

It catalyses the reaction an S-(2-hydroxyacyl)glutathione + H2O = a 2-hydroxy carboxylate + glutathione + H(+). It participates in secondary metabolite metabolism; methylglyoxal degradation; (R)-lactate from methylglyoxal: step 2/2. In terms of biological role, thiolesterase that catalyzes the hydrolysis of S-D-lactoyl-glutathione to form glutathione and D-lactic acid. The protein is Hydroxyacylglutathione hydrolase of Hydrogenovibrio crunogenus (strain DSM 25203 / XCL-2) (Thiomicrospira crunogena).